Reading from the N-terminus, the 209-residue chain is Uracil phosphoribosyltransferase (209 aa).

5-phospho-alpha-D-ribose 1-diphosphate-binding positions include arginine 79, arginine 104, and 131–139; that span reads DPMLATGGS. Residues isoleucine 194 and 199-201 each bind uracil; that span reads GDA. Aspartate 200 contacts 5-phospho-alpha-D-ribose 1-diphosphate.

It belongs to the UPRTase family. Requires Mg(2+) as cofactor.

It catalyses the reaction UMP + diphosphate = 5-phospho-alpha-D-ribose 1-diphosphate + uracil. It functions in the pathway pyrimidine metabolism; UMP biosynthesis via salvage pathway; UMP from uracil: step 1/1. Allosterically activated by GTP. Its function is as follows. Catalyzes the conversion of uracil and 5-phospho-alpha-D-ribose 1-diphosphate (PRPP) to UMP and diphosphate. This Alkaliphilus metalliredigens (strain QYMF) protein is Uracil phosphoribosyltransferase.